A 179-amino-acid polypeptide reads, in one-letter code: Inner membrane-spanning protein YciB (179 aa).

5 helical membrane passes run 24 to 44 (TATGVLMAATVLQMGIIYAME), 49 to 69 (AMQKATLVLILLFGTLTLVLH), 76 to 96 (WKPTVLYGAMAIALAVALWAL), 121 to 141 (VAWIGYCLFMAAINGYVAAYF), and 151 to 171 (LWGYVFPIVFLVAQGLYISPH).

It belongs to the YciB family.

Its subcellular location is the cell inner membrane. Its function is as follows. Plays a role in cell envelope biogenesis, maintenance of cell envelope integrity and membrane homeostasis. In Variovorax paradoxus (strain S110), this protein is Inner membrane-spanning protein YciB.